Consider the following 160-residue polypeptide: Transcription antitermination protein NusB (160 aa).

It belongs to the NusB family.

Its function is as follows. Involved in transcription antitermination. Required for transcription of ribosomal RNA (rRNA) genes. Binds specifically to the boxA antiterminator sequence of the ribosomal RNA (rrn) operons. The polypeptide is Transcription antitermination protein NusB (Rhizobium johnstonii (strain DSM 114642 / LMG 32736 / 3841) (Rhizobium leguminosarum bv. viciae)).